Here is a 1342-residue protein sequence, read N- to C-terminus: DNA-directed RNA polymerase subunit beta (1342 aa).

This sequence belongs to the RNA polymerase beta chain family. As to quaternary structure, the RNAP catalytic core consists of 2 alpha, 1 beta, 1 beta' and 1 omega subunit. When a sigma factor is associated with the core the holoenzyme is formed, which can initiate transcription.

It catalyses the reaction RNA(n) + a ribonucleoside 5'-triphosphate = RNA(n+1) + diphosphate. In terms of biological role, DNA-dependent RNA polymerase catalyzes the transcription of DNA into RNA using the four ribonucleoside triphosphates as substrates. This chain is DNA-directed RNA polymerase subunit beta, found in Pectobacterium atrosepticum (strain SCRI 1043 / ATCC BAA-672) (Erwinia carotovora subsp. atroseptica).